Reading from the N-terminus, the 164-residue chain is FMN reductase (NADH) RutF (164 aa).

This sequence belongs to the non-flavoprotein flavin reductase family. RutF subfamily.

The catalysed reaction is FMNH2 + NAD(+) = FMN + NADH + 2 H(+). In terms of biological role, catalyzes the reduction of FMN to FMNH2 which is used to reduce pyrimidine by RutA via the Rut pathway. The sequence is that of FMN reductase (NADH) RutF from Shigella flexneri serotype X (strain 2002017).